A 193-amino-acid chain; its full sequence is UPF0301 protein Fphi_1754 (193 aa).

The protein belongs to the UPF0301 (AlgH) family.

The sequence is that of UPF0301 protein Fphi_1754 from Francisella philomiragia subsp. philomiragia (strain ATCC 25017 / CCUG 19701 / FSC 153 / O#319-036).